A 670-amino-acid chain; its full sequence is Transcription factor vib-1 (670 aa).

Positions 106 to 341 (TEMVQDLRDD…RSPRNFQARK (236 aa)) form a DNA-binding region, NDT80. Composition is skewed to polar residues over residues 394–438 (FTSA…TTSM) and 553–568 (LGNS…QHHP). 2 disordered regions span residues 394–457 (FTSA…SYTA) and 496–670 (SAPP…WNAT). Positions 592–605 (ASAPASAPTSAAPP) are enriched in low complexity. The span at 611-631 (PSQSWTSTAGEGQTSSYTNGG) shows a compositional bias: polar residues.

The protein localises to the nucleus. Its subcellular location is the cytoplasm. Functionally, transcription factor that acts as a positive regulator of nonrepressible acid phosphatase activity. Is a major regulator of responses to nitrogen and carbon starvation and is essential for the expression of genes involved in vegetative incompatibility (like pin-c, het-6, and tol). Vegetative incompatibility is a non-self-recognition system ubiquitous in filamentous fungi which results in programmed cell death. In Neurospora crassa (strain ATCC 24698 / 74-OR23-1A / CBS 708.71 / DSM 1257 / FGSC 987), this protein is Transcription factor vib-1 (vib-1).